A 283-amino-acid polypeptide reads, in one-letter code: BTB/POZ domain-containing protein KCTD15 (283 aa).

A disordered region spans residues 1–33 (MPHRKERPSGSSLHAHGSTGTAEGGSMSRLSLT). 3 positions are modified to phosphoserine: serine 31, serine 35, and serine 38. In terms of domain architecture, BTB spans 56 to 126 (APVHIDVGGH…LRTSKLLLPD (71 aa)).

As to quaternary structure, forms oligomers, predominantly homopentamers. Interacts with KCTD1, probably forming heteropentamers depending on its abundance in a cell-type dependent manner. Interacts with TFAP2A; this interaction inhibits TFAP2A transcriptional activation.

It localises to the nucleus. Its function is as follows. During embryonic development, interferes with neural crest formation. Inhibits AP2 transcriptional activity by interaction with its activation domain. This is BTB/POZ domain-containing protein KCTD15 (KCTD15) from Bos taurus (Bovine).